The sequence spans 91 residues: DNA-binding protein HU (91 aa).

This sequence belongs to the bacterial histone-like protein family. As to quaternary structure, homodimer.

Its function is as follows. Histone-like DNA-binding protein which is capable of wrapping DNA to stabilize it, and thus to prevent its denaturation under extreme environmental conditions. This is DNA-binding protein HU (hup) from Lactococcus lactis subsp. lactis (strain IL1403) (Streptococcus lactis).